Consider the following 203-residue polypeptide: ATP-dependent Clp protease proteolytic subunit 2 (203 aa).

Catalysis depends on Ser97, which acts as the Nucleophile. Residue His122 is part of the active site.

Belongs to the peptidase S14 family. As to quaternary structure, fourteen ClpP subunits assemble into 2 heptameric rings which stack back to back to give a disk-like structure with a central cavity, resembling the structure of eukaryotic proteasomes.

The protein resides in the cytoplasm. It carries out the reaction Hydrolysis of proteins to small peptides in the presence of ATP and magnesium. alpha-casein is the usual test substrate. In the absence of ATP, only oligopeptides shorter than five residues are hydrolyzed (such as succinyl-Leu-Tyr-|-NHMec, and Leu-Tyr-Leu-|-Tyr-Trp, in which cleavage of the -Tyr-|-Leu- and -Tyr-|-Trp bonds also occurs).. Functionally, cleaves peptides in various proteins in a process that requires ATP hydrolysis. Has a chymotrypsin-like activity. Plays a major role in the degradation of misfolded proteins. This Myxococcus xanthus (strain DK1622) protein is ATP-dependent Clp protease proteolytic subunit 2.